Here is a 321-residue protein sequence, read N- to C-terminus: MRRSSGFGGQKGQGPSCSFTGCWCCRGDDVAESDDSPFAQCGYNIQEKHLGKLHRAASRGEVSKVECILSSGSADLDERDKKKRTALHLACANGHPEVVALLVDRGCQLDVFDNKNRTALLKAVQCQEEECATILLEHGADPDLPDVYGNTTLHYAIYNEDIPMTKKLLLHHANIESANKDELTPFLLAVHEQKQQMEDFLRKQKENLTAVKLESIHQVMSEYKENETPRNPQNSNPEGTSNKMACLGEGAAGAKVDEIPGNPVKRLFNKPSIDDSRPMSANEDFDFDTEEKATEPANGKRQNGMGIIESAPQEHTNNENI.

5 ANK repeats span residues lysine 48–glutamate 78, lysine 82–valine 111, lysine 115–leucine 144, tyrosine 148–serine 177, and aspartate 181–alanine 210. Disordered regions lie at residues glutamate 222 to asparagine 242 and phenylalanine 268 to isoleucine 321. Polar residues predominate over residues proline 229–asparagine 242.

The sequence is that of Putative ankyrin repeat domain-containing protein 26-like protein (ANKRD26P1) from Homo sapiens (Human).